The primary structure comprises 748 residues: Rho GTPase-activating protein 24 (748 aa).

Residues 18 to 124 (NATKCGWLRK…WVKSIRRVIW (107 aa)) form the PH domain. Positions 134-328 (QKLEDTVRYE…VMISKHDRLF (195 aa)) constitute a Rho-GAP domain. The tract at residues 328–476 (FPKDTEPQSK…SSGTKMGTHS (149 aa)) is disordered. Composition is skewed to polar residues over residues 335–347 (QSKP…SNNN) and 356–368 (GQLQ…NTKE). Phosphoserine occurs at positions 369, 391, 396, 398, 402, 413, 415, and 437. A compositionally biased stretch (basic and acidic residues) spans 369 to 381 (SPVRRCSWDKPES). A compositionally biased stretch (polar residues) spans 382–405 (PQRSSMDNGSPTALSGSKTNSPRN). Over residues 432–476 (IVTNGSFSSSNAEGVEKTQTTPNGSLQARRTSSLKSSGTKMGTHS) the composition is skewed to polar residues. A Phosphothreonine modification is found at Thr-452. Residue Ser-495 is modified to Phosphoserine. The segment at 582–640 (DFYGGNFEDPVLDGPPQDDLSHPGDYENKSDRRSVGGRSSRATSSSDNSETFVGNTSSN) is disordered. Over residues 600–615 (DLSHPGDYENKSDRRS) the composition is skewed to basic and acidic residues. Residues 617-630 (GGRSSRATSSSDNS) show a composition bias toward low complexity. Polar residues predominate over residues 631-640 (ETFVGNTSSN). A coiled-coil region spans residues 649 to 729 (SSLKQEMTKQ…KEMEQFFSTF (81 aa)).

In terms of assembly, interacts with FLNA. Post-translationally, phosphorylated by ROCK, leading to activate the RacGAP activity.

It is found in the cytoplasm. The protein resides in the cytoskeleton. The protein localises to the cell junction. It localises to the adherens junction. Its subcellular location is the focal adhesion. It is found in the cell projection. Functionally, rho GTPase-activating protein involved in cell polarity, cell morphology and cytoskeletal organization. Acts as a GTPase activator for the Rac-type GTPase by converting it to an inactive GDP-bound state. Controls actin remodeling by inactivating Rac downstream of Rho leading to suppress leading edge protrusion and promotes cell retraction to achieve cellular polarity. Able to suppress RAC1 and CDC42 activity in vitro. Overexpression induces cell rounding with partial or complete disruption of actin stress fibers and formation of membrane ruffles, lamellipodia, and filopodia. Isoform 2 is a vascular cell-specific GAP involved in modulation of angiogenesis. This Rattus norvegicus (Rat) protein is Rho GTPase-activating protein 24 (Arhgap24).